Reading from the N-terminus, the 302-residue chain is Aspartate carbamoyltransferase catalytic subunit (302 aa).

Carbamoyl phosphate contacts are provided by arginine 54 and threonine 55. Lysine 82 provides a ligand contact to L-aspartate. 3 residues coordinate carbamoyl phosphate: arginine 104, histidine 132, and glutamine 135. L-aspartate is bound by residues arginine 165 and arginine 217. Residues glycine 257 and proline 258 each coordinate carbamoyl phosphate.

This sequence belongs to the aspartate/ornithine carbamoyltransferase superfamily. ATCase family. In terms of assembly, heterododecamer (2C3:3R2) of six catalytic PyrB chains organized as two trimers (C3), and six regulatory PyrI chains organized as three dimers (R2).

The enzyme catalyses carbamoyl phosphate + L-aspartate = N-carbamoyl-L-aspartate + phosphate + H(+). It functions in the pathway pyrimidine metabolism; UMP biosynthesis via de novo pathway; (S)-dihydroorotate from bicarbonate: step 2/3. Catalyzes the condensation of carbamoyl phosphate and aspartate to form carbamoyl aspartate and inorganic phosphate, the committed step in the de novo pyrimidine nucleotide biosynthesis pathway. This is Aspartate carbamoyltransferase catalytic subunit from Thermus thermophilus (strain ATCC BAA-163 / DSM 7039 / HB27).